The following is a 703-amino-acid chain: Glycogen [starch] synthase, liver (703 aa).

S8 is modified (phosphoserine; by PKA). S11 is modified (phosphoserine). Position 40 (K40) interacts with UDP. Residues H205 and R211 each contribute to the UDP-alpha-D-glucose site. Positions 291, 292, 294, 297, and 301 each coordinate alpha-D-glucose 6-phosphate. R331 is a UDP binding site. Residue R331 coordinates UDP-alpha-D-glucose. Residue H501 participates in alpha-D-glucose 6-phosphate binding. UDP-alpha-D-glucose is bound by residues E510, W512, and G513. UDP is bound at residue T515. Residues R582 and R586 each coordinate alpha-D-glucose 6-phosphate. S627 carries the phosphoserine modification. Positions 628 to 703 (PPTTEGFKYP…KKKLHGEYKN (76 aa)) are disordered. Residues S641, S645, S649, and S653 each carry the phosphoserine; by GSK3-alpha and GSK3-beta modification. A compositionally biased stretch (low complexity) spans 647 to 657 (SGSQASSPQSS). A Phosphoserine; by CK2 modification is found at S657. Acidic residues predominate over residues 658–674 (DVEDEVEDERYDEEEEA). S683 is subject to Phosphoserine.

Belongs to the glycosyltransferase 3 family. In terms of assembly, part of the glycogen synthase (GS)-glycogenin complex, a heterooctamer composed of a tetramer of GS and 2 dimers of glycogenin, where each GS protomer binds to one glycogenin subunit (via glycogenin C-terminus); the GS tetramer may dissociate from glycogenin dimers to continue glycogen polymerization on its own. May also form a heterooctamer complex with GYG1 (via GYG1 C-terminus). In terms of processing, primed phosphorylation at Ser-657 (site 5) by CSNK2A1 and CSNK2A2 is required for inhibitory phosphorylation at Ser-641 (site 3a), Ser-645 (site 3b), Ser-649 (site 3c) and Ser-653 (site 4) by GSK3A an GSK3B. Dephosphorylation at Ser-641 and Ser-645 by PP1 activates the enzyme. Phosphorylation at Ser-8 is not required for interaction with GYG1. Interaction with GYG1 does not regulate the phosphorylation at Ser-8 and Ser-641. Specifically expressed in liver (at protein level).

It catalyses the reaction [(1-&gt;4)-alpha-D-glucosyl](n) + UDP-alpha-D-glucose = [(1-&gt;4)-alpha-D-glucosyl](n+1) + UDP + H(+). The protein operates within glycan biosynthesis; glycogen biosynthesis. Its activity is regulated as follows. Allosteric activation by glucose-6-phosphate. Phosphorylation reduces the activity towards UDP-glucose. When in the non-phosphorylated state, glycogen synthase does not require glucose-6-phosphate as an allosteric activator; when phosphorylated it does. In terms of biological role, glycogen synthase participates in the glycogen biosynthetic process along with glycogenin and glycogen branching enzyme. Extends the primer composed of a few glucose units formed by glycogenin by adding new glucose units to it. In this context, glycogen synthase transfers the glycosyl residue from UDP-Glc to the non-reducing end of alpha-1,4-glucan. This Homo sapiens (Human) protein is Glycogen [starch] synthase, liver.